A 305-amino-acid polypeptide reads, in one-letter code: Peroxidase A2 (305 aa).

Glutamine 1 carries the post-translational modification Pyrrolidone carboxylic acid. Residues asparagine 3 and asparagine 13 are each glycosylated (N-linked (GlcNAc...) asparagine). Intrachain disulfides connect cysteine 11–cysteine 91, cysteine 44–cysteine 49, cysteine 97–cysteine 299, and cysteine 176–cysteine 208. Histidine 42 serves as the catalytic Proton acceptor. Ca(2+) is bound by residues aspartate 43, valine 46, glycine 48, aspartate 50, and serine 52. A substrate-binding site is contributed by proline 139. Asparagine 147 is a glycosylation site (N-linked (GlcNAc...) asparagine). Position 169 (histidine 169) interacts with heme b. A Ca(2+)-binding site is contributed by threonine 170. N-linked (GlcNAc...) asparagine glycosylation is found at asparagine 185, asparagine 197, and asparagine 211. 3 residues coordinate Ca(2+): aspartate 221, threonine 224, and aspartate 229. Residue asparagine 267 is glycosylated (N-linked (GlcNAc...) asparagine).

It belongs to the peroxidase family. Classical plant (class III) peroxidase subfamily. Ca(2+) is required as a cofactor. The cofactor is heme b.

It catalyses the reaction 2 a phenolic donor + H2O2 = 2 a phenolic radical donor + 2 H2O. Its function is as follows. Removal of H(2)O(2), oxidation of toxic reductants, biosynthesis and degradation of lignin, suberization, auxin catabolism, response to environmental stresses such as wounding, pathogen attack and oxidative stress. These functions might be dependent on each isozyme/isoform in each plant tissue. This is Peroxidase A2 (HRPA2) from Armoracia rusticana (Horseradish).